The primary structure comprises 157 residues: Protein Smg homolog (157 aa).

This sequence belongs to the Smg family.

The polypeptide is Protein Smg homolog (Shewanella denitrificans (strain OS217 / ATCC BAA-1090 / DSM 15013)).